The chain runs to 353 residues: Phosphoribosylformylglycinamidine cyclo-ligase (353 aa).

It belongs to the AIR synthase family.

It localises to the cytoplasm. The enzyme catalyses 2-formamido-N(1)-(5-O-phospho-beta-D-ribosyl)acetamidine + ATP = 5-amino-1-(5-phospho-beta-D-ribosyl)imidazole + ADP + phosphate + H(+). It functions in the pathway purine metabolism; IMP biosynthesis via de novo pathway; 5-amino-1-(5-phospho-D-ribosyl)imidazole from N(2)-formyl-N(1)-(5-phospho-D-ribosyl)glycinamide: step 2/2. The polypeptide is Phosphoribosylformylglycinamidine cyclo-ligase (Pseudomonas aeruginosa (strain LESB58)).